Here is a 117-residue protein sequence, read N- to C-terminus: Large ribosomal subunit protein bL20 (117 aa).

Belongs to the bacterial ribosomal protein bL20 family.

Binds directly to 23S ribosomal RNA and is necessary for the in vitro assembly process of the 50S ribosomal subunit. It is not involved in the protein synthesizing functions of that subunit. This is Large ribosomal subunit protein bL20 from Vibrio campbellii (strain ATCC BAA-1116).